Consider the following 572-residue polypeptide: Proline--tRNA ligase (572 aa).

It belongs to the class-II aminoacyl-tRNA synthetase family. ProS type 1 subfamily. In terms of assembly, homodimer.

The protein localises to the cytoplasm. The catalysed reaction is tRNA(Pro) + L-proline + ATP = L-prolyl-tRNA(Pro) + AMP + diphosphate. In terms of biological role, catalyzes the attachment of proline to tRNA(Pro) in a two-step reaction: proline is first activated by ATP to form Pro-AMP and then transferred to the acceptor end of tRNA(Pro). As ProRS can inadvertently accommodate and process non-cognate amino acids such as alanine and cysteine, to avoid such errors it has two additional distinct editing activities against alanine. One activity is designated as 'pretransfer' editing and involves the tRNA(Pro)-independent hydrolysis of activated Ala-AMP. The other activity is designated 'posttransfer' editing and involves deacylation of mischarged Ala-tRNA(Pro). The misacylated Cys-tRNA(Pro) is not edited by ProRS. The polypeptide is Proline--tRNA ligase (Yersinia enterocolitica serotype O:8 / biotype 1B (strain NCTC 13174 / 8081)).